Reading from the N-terminus, the 464-residue chain is tRNA modification GTPase MnmE (464 aa).

Arg26, Glu92, and Arg131 together coordinate (6S)-5-formyl-5,6,7,8-tetrahydrofolate. The region spanning 227-385 (GIKVAILGRV…LISALKDYVS (159 aa)) is the TrmE-type G domain. Asn237 serves as a coordination point for K(+). Residues 237-242 (NAGKSS), 256-262 (SNIAGTT), and 281-284 (DTAG) contribute to the GTP site. Residue Ser241 participates in Mg(2+) binding. Residues Ser256, Ile258, and Thr261 each coordinate K(+). Thr262 is a binding site for Mg(2+). Lys464 lines the (6S)-5-formyl-5,6,7,8-tetrahydrofolate pocket.

It belongs to the TRAFAC class TrmE-Era-EngA-EngB-Septin-like GTPase superfamily. TrmE GTPase family. In terms of assembly, homodimer. Heterotetramer of two MnmE and two MnmG subunits. It depends on K(+) as a cofactor.

Its subcellular location is the cytoplasm. In terms of biological role, exhibits a very high intrinsic GTPase hydrolysis rate. Involved in the addition of a carboxymethylaminomethyl (cmnm) group at the wobble position (U34) of certain tRNAs, forming tRNA-cmnm(5)s(2)U34. The sequence is that of tRNA modification GTPase MnmE from Brachyspira hyodysenteriae (strain ATCC 49526 / WA1).